The following is a 97-amino-acid chain: UPF0213 protein BLi00048/BL00536 (97 aa).

The region spanning 4–79 (NSHYFYVLSC…KKLSRKNKER (76 aa)) is the GIY-YIG domain.

It belongs to the UPF0213 family.

This chain is UPF0213 protein BLi00048/BL00536, found in Bacillus licheniformis (strain ATCC 14580 / DSM 13 / JCM 2505 / CCUG 7422 / NBRC 12200 / NCIMB 9375 / NCTC 10341 / NRRL NRS-1264 / Gibson 46).